A 366-amino-acid polypeptide reads, in one-letter code: Protein-glutamate methylesterase/protein-glutamine glutaminase of group 2 operon (366 aa).

In terms of domain architecture, Response regulatory spans 19-136 (RVLIVDDSAM…GQGLPAIMRD (118 aa)). Asp-70 carries the post-translational modification 4-aspartylphosphate. The CheB-type methylesterase domain maps to 162 to 356 (PGASEDWIHA…ARMMLAAAAD (195 aa)). Catalysis depends on residues Ser-175, His-201, and Asp-298.

Belongs to the CheB family. Post-translationally, phosphorylated by CheA. Phosphorylation of the N-terminal regulatory domain activates the methylesterase activity.

The protein localises to the cytoplasm. It carries out the reaction [protein]-L-glutamate 5-O-methyl ester + H2O = L-glutamyl-[protein] + methanol + H(+). The catalysed reaction is L-glutaminyl-[protein] + H2O = L-glutamyl-[protein] + NH4(+). In terms of biological role, involved in chemotaxis. Part of a chemotaxis signal transduction system that modulates chemotaxis in response to various stimuli. Catalyzes the demethylation of specific methylglutamate residues introduced into the chemoreceptors (methyl-accepting chemotaxis proteins or MCP) by CheR. Also mediates the irreversible deamidation of specific glutamine residues to glutamic acid. In Cereibacter sphaeroides (Rhodobacter sphaeroides), this protein is Protein-glutamate methylesterase/protein-glutamine glutaminase of group 2 operon.